The sequence spans 144 residues: Large ribosomal subunit protein uL15 (144 aa).

The interval 1–58 is disordered; that stretch reads MNLSNLRAPRKANEKKKRVGRGMGSGMGKTSARGHKGQRSRSGSRMMRGFEGGQMPLH. A compositionally biased stretch (basic residues) spans 8-20; it reads APRKANEKKKRVG. Positions 40-49 are enriched in low complexity; that stretch reads SRSGSRMMRG.

Belongs to the universal ribosomal protein uL15 family. As to quaternary structure, part of the 50S ribosomal subunit.

Its function is as follows. Binds to the 23S rRNA. The protein is Large ribosomal subunit protein uL15 of Koribacter versatilis (strain Ellin345).